We begin with the raw amino-acid sequence, 159 residues long: Ribosomal RNA large subunit methyltransferase H (159 aa).

S-adenosyl-L-methionine-binding positions include leucine 76, glycine 108, and 127-132; that span reads FSKMTF.

It belongs to the RNA methyltransferase RlmH family. Homodimer.

Its subcellular location is the cytoplasm. It catalyses the reaction pseudouridine(1915) in 23S rRNA + S-adenosyl-L-methionine = N(3)-methylpseudouridine(1915) in 23S rRNA + S-adenosyl-L-homocysteine + H(+). In terms of biological role, specifically methylates the pseudouridine at position 1915 (m3Psi1915) in 23S rRNA. The polypeptide is Ribosomal RNA large subunit methyltransferase H (Clostridium botulinum (strain ATCC 19397 / Type A)).